A 485-amino-acid polypeptide reads, in one-letter code: Zinc finger protein 639 (485 aa).

Positions 1-14 (MNEYPKKRKRKTLH) are enriched in basic residues. The tract at residues 1–20 (MNEYPKKRKRKTLHPSRYSD) is disordered. Residue Ser-60 is modified to Phosphoserine. Residue Lys-76 forms a Glycyl lysine isopeptide (Lys-Gly) (interchain with G-Cter in SUMO2) linkage. A Phosphoserine modification is found at Ser-88. Glycyl lysine isopeptide (Lys-Gly) (interchain with G-Cter in SUMO2) cross-links involve residues Lys-177, Lys-181, and Lys-226. 8 C2H2-type zinc fingers span residues 204–227 (YKCELCEFNSKYFSDLKQHMILKH), 233–255 (NVCRVCKESFSTNMLLIEHAKLH), 260–283 (YICKYCDYKTVIFENLSQHIADTH), 289–311 (YWCEQCDVQFSSSSELYLHFQEH), 374–397 (FVCQVCGFRSRLHTNVNRHVAIEH), 403–425 (HVCDDCGKGFSSMLEYCKHLNSH), 431–454 (YLCQYCEYSTGQIEDLKIHLDFKH), and 460–482 (HKCSDCLMRFGNERELISHLPVH). The interaction with CTNNA2 stretch occupies residues 371-455 (KNFFVCQVCG…LKIHLDFKHS (85 aa)).

This sequence belongs to the krueppel C2H2-type zinc-finger protein family. As to quaternary structure, interacts with CTNNA2.

Its subcellular location is the nucleus. Binds DNA and may function as a transcriptional repressor. The sequence is that of Zinc finger protein 639 (ZNF639) from Bos taurus (Bovine).